Reading from the N-terminus, the 722-residue chain is Pesticidal crystal protein Cry22Aa (722 aa).

Its function is as follows. Promotes colloidosmotic lysis by binding to the midgut epithelial cells of hymenopteran species. The polypeptide is Pesticidal crystal protein Cry22Aa (cry22Aa) (Bacillus thuringiensis).